Consider the following 122-residue polypeptide: Large ribosomal subunit protein uL14 (122 aa).

The protein belongs to the universal ribosomal protein uL14 family. In terms of assembly, part of the 50S ribosomal subunit. Forms a cluster with proteins L3 and L19. In the 70S ribosome, L14 and L19 interact and together make contacts with the 16S rRNA in bridges B5 and B8.

Functionally, binds to 23S rRNA. Forms part of two intersubunit bridges in the 70S ribosome. The protein is Large ribosomal subunit protein uL14 of Orientia tsutsugamushi (strain Boryong) (Rickettsia tsutsugamushi).